We begin with the raw amino-acid sequence, 41 residues long: Large ribosomal subunit protein bL36 (41 aa).

This sequence belongs to the bacterial ribosomal protein bL36 family.

The sequence is that of Large ribosomal subunit protein bL36 from Rhizobium etli (strain CIAT 652).